The chain runs to 547 residues: Chaperonin GroEL (547 aa).

Residues 30–33, Lys51, 87–91, Gly415, 479–481, and Asp495 contribute to the ATP site; these read TLGP, DGTTT, and NAA. A disordered region spans residues 524–547; the sequence is APKKDEPTPPAAGGGMGGMGGMDF. Positions 535-547 are enriched in gly residues; sequence AGGGMGGMGGMDF.

This sequence belongs to the chaperonin (HSP60) family. In terms of assembly, forms a cylinder of 14 subunits composed of two heptameric rings stacked back-to-back. Interacts with the co-chaperonin GroES.

Its subcellular location is the cytoplasm. It carries out the reaction ATP + H2O + a folded polypeptide = ADP + phosphate + an unfolded polypeptide.. Together with its co-chaperonin GroES, plays an essential role in assisting protein folding. The GroEL-GroES system forms a nano-cage that allows encapsulation of the non-native substrate proteins and provides a physical environment optimized to promote and accelerate protein folding. In Xylella fastidiosa (strain 9a5c), this protein is Chaperonin GroEL.